Here is a 244-residue protein sequence, read N- to C-terminus: Flavin-dependent thymidylate synthase (244 aa).

The 206-residue stretch at 2-207 (VRVTLVNYTK…DIRPIIKWAK (206 aa)) folds into the ThyX domain. FAD-binding positions include S56, 80-82 (RHR), and Q88. DUMP is bound by residues 77-80 (QLVR), 88-92 (QQSQR), and R146. Positions 80-90 (RHRIASYTQQS) match the ThyX motif motif. FAD contacts are provided by residues 162 to 164 (NLR) and H168. R173 contributes to the dUMP binding site. R173 serves as the catalytic Involved in ionization of N3 of dUMP, leading to its activation.

It belongs to the thymidylate synthase ThyX family. Homotetramer. The cofactor is FAD.

It catalyses the reaction dUMP + (6R)-5,10-methylene-5,6,7,8-tetrahydrofolate + NADPH + H(+) = dTMP + (6S)-5,6,7,8-tetrahydrofolate + NADP(+). It participates in pyrimidine metabolism; dTTP biosynthesis. Its function is as follows. Catalyzes the reductive methylation of 2'-deoxyuridine-5'-monophosphate (dUMP) to 2'-deoxythymidine-5'-monophosphate (dTMP) while utilizing 5,10-methylenetetrahydrofolate (mTHF) as the methyl donor, and NADPH and FADH(2) as the reductant. This chain is Flavin-dependent thymidylate synthase, found in Pyrococcus furiosus (strain ATCC 43587 / DSM 3638 / JCM 8422 / Vc1).